We begin with the raw amino-acid sequence, 231 residues long: MEAQAVPEGSGPSTASPRTAPPVTVLVMRQDEAEADGALRPGLAGSEAAADAEDEAGDDDADLLDTSDPAGGGESAASPEELEDEDAEGGGAARRRGSKTCTYEGCRETTSQVAKQRKPWMCKKHRNKMYKDKYKKKKSDQALGSGGPSAASTGNVKLEESTDNILSIVKQRTGSFGDRPARPTLLEQVLNQKRLSLLRSPEVVQFLQKQQQLLNQQVLEQRQQHFPGAPV.

A disordered region spans residues 1–163 (MEAQAVPEGS…GNVKLEESTD (163 aa)). The segment covering 50–65 (ADAEDEAGDDDADLLD) has biased composition (acidic residues). Residues 115 to 138 (KQRKPWMCKKHRNKMYKDKYKKKK) are compositionally biased toward basic residues. The Nuclear localization signal signature appears at 123 to 138 (KKHRNKMYKDKYKKKK). A Glycyl lysine isopeptide (Lys-Gly) (interchain with G-Cter in SUMO2) cross-link involves residue K157.

RFX consists of at least 3 different subunits; RFXAP, RFX5 and RFX-B/RFXANK; with each subunit representing a separate complementation group. RFX forms cooperative DNA binding complexes with X2BP and CBF/NF-Y. RFX associates with CIITA to form an active transcriptional complex. Post-translationally, phosphorylated.

It is found in the nucleus. In terms of biological role, part of the RFX complex that binds to the X-box of MHC II promoters. This Mus musculus (Mouse) protein is Regulatory factor X-associated protein (Rfxap).